The chain runs to 208 residues: Thiamine-phosphate synthase (208 aa).

Residues 37–39 (QVR) and Asn70 each bind 4-amino-2-methyl-5-(diphosphooxymethyl)pyrimidine. Positions 71 and 90 each coordinate Mg(2+). Residue Thr109 participates in 4-amino-2-methyl-5-(diphosphooxymethyl)pyrimidine binding. 135–137 (TTS) is a binding site for 2-[(2R,5Z)-2-carboxy-4-methylthiazol-5(2H)-ylidene]ethyl phosphate. Residue Lys138 participates in 4-amino-2-methyl-5-(diphosphooxymethyl)pyrimidine binding. A 2-[(2R,5Z)-2-carboxy-4-methylthiazol-5(2H)-ylidene]ethyl phosphate-binding site is contributed by Gly166.

The protein belongs to the thiamine-phosphate synthase family. It depends on Mg(2+) as a cofactor.

It catalyses the reaction 2-[(2R,5Z)-2-carboxy-4-methylthiazol-5(2H)-ylidene]ethyl phosphate + 4-amino-2-methyl-5-(diphosphooxymethyl)pyrimidine + 2 H(+) = thiamine phosphate + CO2 + diphosphate. It carries out the reaction 2-(2-carboxy-4-methylthiazol-5-yl)ethyl phosphate + 4-amino-2-methyl-5-(diphosphooxymethyl)pyrimidine + 2 H(+) = thiamine phosphate + CO2 + diphosphate. The catalysed reaction is 4-methyl-5-(2-phosphooxyethyl)-thiazole + 4-amino-2-methyl-5-(diphosphooxymethyl)pyrimidine + H(+) = thiamine phosphate + diphosphate. It participates in cofactor biosynthesis; thiamine diphosphate biosynthesis; thiamine phosphate from 4-amino-2-methyl-5-diphosphomethylpyrimidine and 4-methyl-5-(2-phosphoethyl)-thiazole: step 1/1. Functionally, condenses 4-methyl-5-(beta-hydroxyethyl)thiazole monophosphate (THZ-P) and 2-methyl-4-amino-5-hydroxymethyl pyrimidine pyrophosphate (HMP-PP) to form thiamine monophosphate (TMP). In Salinispora arenicola (strain CNS-205), this protein is Thiamine-phosphate synthase.